The primary structure comprises 265 residues: Keratinocyte-associated transmembrane protein 2 (265 aa).

An N-terminal signal peptide occupies residues 1–49 (MAAAALKRMRGPAQAKLLPGSAIQALVGLARPLVLALLLVSAALSSVVS). The Extracellular portion of the chain corresponds to 50-196 (RTDSPSPTVL…MPSSNIEEED (147 aa)). Residues 72–96 (THENQTKPSISQISTTLPPTMSTEK) are compositionally biased toward polar residues. 2 disordered regions span residues 72 to 123 (THEN…EDPS) and 135 to 168 (SPSTAKDTLDNGDYGEPDYDWTTGPRDDDESDDT). N-linked (GlcNAc...) asparagine glycosylation is present at Asn-75. Over residues 114 to 123 (EEADNNEDPS) the composition is skewed to acidic residues. Residues 197–217 (SHFFFHLIIFAFCIAVVYITY) traverse the membrane as a helical segment. Topologically, residues 218–265 (HNKRKIFLLVQSRKWRDGLCSKTVEYHRLDQNVNEAMPSLKITNDYTF) are cytoplasmic. Phosphoserine occurs at positions 229 and 256.

The protein resides in the membrane. This Pongo abelii (Sumatran orangutan) protein is Keratinocyte-associated transmembrane protein 2 (KCT2).